We begin with the raw amino-acid sequence, 285 residues long: Steroidogenic acute regulatory protein, mitochondrial (285 aa).

The N-terminal 61 residues, methionine 1–isoleucine 61, are a transit peptide targeting the mitochondrion. Residues threonine 65–glycine 278 form the START domain.

May interact with TSPO. In terms of tissue distribution, highly expressed in the testis and at lower levels in the ovary, kidney and head.

The protein localises to the mitochondrion. The catalysed reaction is cholesterol(in) = cholesterol(out). The protein operates within steroid metabolism; cholesterol metabolism. Plays a key role in steroid hormone synthesis by enhancing the metabolism of cholesterol into pregnenolone. Mediates the transfer of cholesterol from the outer mitochondrial membrane to the inner mitochondrial membrane where it is cleaved to pregnenolone. This is Steroidogenic acute regulatory protein, mitochondrial (star) from Danio rerio (Zebrafish).